Reading from the N-terminus, the 394-residue chain is Bone morphogenetic protein 15 (394 aa).

An N-terminal signal peptide occupies residues 1 to 18; the sequence is MVLLSILRILLLWGLVLF. A propeptide spanning residues 19 to 269 is cleaved from the precursor; the sequence is MEHRVQMTQV…DPSLLLRRAR (251 aa). N-linked (GlcNAc...) asparagine glycans are attached at residues asparagine 87 and asparagine 238. 3 disulfide bridges follow: cysteine 293–cysteine 359, cysteine 322–cysteine 391, and cysteine 326–cysteine 393. Asparagine 375 carries N-linked (GlcNAc...) asparagine glycosylation.

The protein belongs to the TGF-beta family. In terms of assembly, homodimer or heterodimer (Potential). But, in contrast to other members of this family, cannot be disulfide-linked.

It localises to the secreted. May be involved in follicular development. Seems to be an oocyte-specific growth/differentiation factor that stimulates folliculogenesis and granulosa cell (GC) growth. The chain is Bone morphogenetic protein 15 (BMP15) from Bos taurus (Bovine).